The following is a 347-amino-acid chain: Probable 3-hydroxyisobutyrate dehydrogenase, mitochondrial (347 aa).

The N-terminal 34 residues, 1 to 34 (MAIRRAQTLLCLSKFKTNFVSGSLHRFSSSSQNS), are a transit peptide targeting the mitochondrion. NAD(+) is bound by residues 38-67 (QNVGFIGLGNMGFRMVNNLIRAGYKVTVHD), 101-102 (LP), and threonine 134. Lysine 219 is an active-site residue. Position 294 (lysine 294) interacts with NAD(+).

This sequence belongs to the HIBADH-related family. 3-hydroxyisobutyrate dehydrogenase subfamily.

It is found in the mitochondrion. The catalysed reaction is 3-hydroxy-2-methylpropanoate + NAD(+) = 2-methyl-3-oxopropanoate + NADH + H(+). It functions in the pathway amino-acid degradation; L-valine degradation. This chain is Probable 3-hydroxyisobutyrate dehydrogenase, mitochondrial, found in Arabidopsis thaliana (Mouse-ear cress).